The sequence spans 485 residues: Shutoff alkaline exonuclease (485 aa).

The protein belongs to the herpesviridae alkaline nuclease family. As to quaternary structure, forms a complex with the DNA polymerase, the DNA polymerase processivity factor, and the major DNA binding protein.

Its subcellular location is the host nucleus. The protein resides in the host cytoplasm. Functionally, plays a role in processing non linear or branched viral DNA intermediates in order to promote the production of mature packaged unit-length linear progeny viral DNA molecules. Exhibits endonuclease and exonuclease activities and accepts both double-stranded and single-stranded DNA as substrate. Exonuclease digestion of DNA is in the 5'-&gt; 3' direction and the products are 5'-monophosphate nucleosides. Additionally, forms a recombinase with the major DNA-binding protein, which displays strand exchange activity. Also acts as a cytoplasmic RNA endonuclease that induces degradation of the majority of the cellular messenger RNAs during early lytic infection. The resulting inhibition of cellular protein synthesis serves to ensure maximal viral gene expression and evasion from host immune response. Internally cleaves host mRNAs which are then degraded by the cellular exonuclease XRN1. Bypasses therefore the regulatory steps of deadenylation and decapping normally required for XRN1 activation. This chain is Shutoff alkaline exonuclease (37), found in Alcelaphine herpesvirus 1 (strain C500) (AlHV-1).